The sequence spans 323 residues: Annexin A5 (323 aa).

Annexin repeat units follow at residues 17-88, 89-160, 172-244, and 248-319; these read FNDK…ALMV, PAHL…SLVQ, GQVE…AVVK, and SIQG…LLCG.

Belongs to the annexin family.

Functionally, calcium/phospholipid-binding protein which promotes membrane fusion and is involved in exocytosis. The polypeptide is Annexin A5 (Cynops pyrrhogaster (Japanese fire-bellied newt)).